The chain runs to 838 residues: Protein P (838 aa).

The interval 1–179 (MPLSYQHFRK…FCGSPYSWEQ (179 aa)) is terminal protein domain (TP). A spacer region spans residues 180-341 (ELQHSQRHGD…YCLSHLVNLL (162 aa)). Residues 218 to 242 (LGLQPHQGPLATSQPGRSGSIRPRA) form a disordered region. Positions 342–685 (EDWGPCVEHG…YLNLYPVARQ (344 aa)) are polymerase/reverse transcriptase domain (RT). Positions 352 to 595 (EHHIRIPRTP…YSLNFMGYVI (244 aa)) constitute a Reverse transcriptase domain. Mg(2+) is bound by residues D424, D546, and D547.

Belongs to the hepadnaviridae P protein family.

It carries out the reaction DNA(n) + a 2'-deoxyribonucleoside 5'-triphosphate = DNA(n+1) + diphosphate. The enzyme catalyses Endonucleolytic cleavage to 5'-phosphomonoester.. Activated by host HSP70 and HSP40 in vitro to be able to bind the epsilon loop of the pgRNA. Because deletion of the RNase H region renders the protein partly chaperone-independent, the chaperones may be needed indirectly to relieve occlusion of the RNA-binding site by this domain. Inhibited by several reverse-transcriptase inhibitors: Lamivudine, Adefovir and Entecavir. Multifunctional enzyme that converts the viral RNA genome into dsDNA in viral cytoplasmic capsids. This enzyme displays a DNA polymerase activity that can copy either DNA or RNA templates, and a ribonuclease H (RNase H) activity that cleaves the RNA strand of RNA-DNA heteroduplexes in a partially processive 3'- to 5'-endonucleasic mode. Neo-synthesized pregenomic RNA (pgRNA) are encapsidated together with the P protein, and reverse-transcribed inside the nucleocapsid. Initiation of reverse-transcription occurs first by binding the epsilon loop on the pgRNA genome, and is initiated by protein priming, thereby the 5'-end of (-)DNA is covalently linked to P protein. Partial (+)DNA is synthesized from the (-)DNA template and generates the relaxed circular DNA (RC-DNA) genome. After budding and infection, the RC-DNA migrates in the nucleus, and is converted into a plasmid-like covalently closed circular DNA (cccDNA). The activity of P protein does not seem to be necessary for cccDNA generation, and is presumably released from (+)DNA by host nuclear DNA repair machinery. The chain is Protein P from Homo sapiens (Human).